A 441-amino-acid polypeptide reads, in one-letter code: Amino-acid acetyltransferase (441 aa).

An N-acetyltransferase domain is found at 295 to 434 (EQVRRATIND…QALYNYQRRS (140 aa)).

The protein belongs to the acetyltransferase family. ArgA subfamily. In terms of assembly, homohexamer.

The protein resides in the cytoplasm. It catalyses the reaction L-glutamate + acetyl-CoA = N-acetyl-L-glutamate + CoA + H(+). Its pathway is amino-acid biosynthesis; L-arginine biosynthesis; N(2)-acetyl-L-ornithine from L-glutamate: step 1/4. In Serratia proteamaculans (strain 568), this protein is Amino-acid acetyltransferase.